The following is a 341-amino-acid chain: Phenylalanine--tRNA ligase alpha subunit (341 aa).

A Mg(2+)-binding site is contributed by Glu-259.

Belongs to the class-II aminoacyl-tRNA synthetase family. Phe-tRNA synthetase alpha subunit type 1 subfamily. Tetramer of two alpha and two beta subunits. Mg(2+) serves as cofactor.

The protein localises to the cytoplasm. The enzyme catalyses tRNA(Phe) + L-phenylalanine + ATP = L-phenylalanyl-tRNA(Phe) + AMP + diphosphate + H(+). In Mycobacterium tuberculosis (strain ATCC 25177 / H37Ra), this protein is Phenylalanine--tRNA ligase alpha subunit.